Consider the following 187-residue polypeptide: Shikimate kinase (187 aa).

18 to 23 (GCGKST) provides a ligand contact to ATP. Serine 22 lines the Mg(2+) pocket. Aspartate 40, arginine 64, and glycine 86 together coordinate substrate. Arginine 128 is an ATP binding site. Arginine 147 contacts substrate. Arginine 164 contacts ATP.

This sequence belongs to the shikimate kinase family. In terms of assembly, monomer. The cofactor is Mg(2+).

Its subcellular location is the cytoplasm. The enzyme catalyses shikimate + ATP = 3-phosphoshikimate + ADP + H(+). The protein operates within metabolic intermediate biosynthesis; chorismate biosynthesis; chorismate from D-erythrose 4-phosphate and phosphoenolpyruvate: step 5/7. Catalyzes the specific phosphorylation of the 3-hydroxyl group of shikimic acid using ATP as a cosubstrate. The protein is Shikimate kinase of Rhodopirellula baltica (strain DSM 10527 / NCIMB 13988 / SH1).